Reading from the N-terminus, the 272-residue chain is PHD finger protein ALFIN-LIKE 6 (272 aa).

A compositionally biased stretch (gly residues) spans 1-23; it reads MEGGGGGGGGGGGGGGGGGGGGA. 2 disordered regions span residues 1 to 24 and 162 to 218; these read MEGG…GGAP and QAKE…DNTL. A compositionally biased stretch (low complexity) spans 168 to 182; sequence PNSSSKSNKPSSKVQ. The segment covering 183–200 has biased composition (basic and acidic residues); sequence SKAESRSKSKLSAPKDEE. Residues 201 to 214 are compositionally biased toward acidic residues; it reads GSGDDEGEEEEDDH. The PHD-type zinc-finger motif lies at 216–268; the sequence is NTLCGTCGTNDGKDEFWICCDNCEKWYHGKCVKITPARAEHIKQYKCPDCTNK.

The protein belongs to the Alfin family.

It is found in the nucleus. In terms of biological role, histone-binding component that specifically recognizes H3 tails trimethylated on 'Lys-4' (H3K4me3), which mark transcription start sites of virtually all active genes. The chain is PHD finger protein ALFIN-LIKE 6 from Oryza sativa subsp. japonica (Rice).